A 502-amino-acid polypeptide reads, in one-letter code: Probable cytosol aminopeptidase (502 aa).

Mn(2+)-binding residues include Lys-269 and Asp-274. Lys-281 is a catalytic residue. Mn(2+) contacts are provided by Asp-292, Asp-351, and Glu-353. The active site involves Arg-355.

The protein belongs to the peptidase M17 family. Requires Mn(2+) as cofactor.

It is found in the cytoplasm. The enzyme catalyses Release of an N-terminal amino acid, Xaa-|-Yaa-, in which Xaa is preferably Leu, but may be other amino acids including Pro although not Arg or Lys, and Yaa may be Pro. Amino acid amides and methyl esters are also readily hydrolyzed, but rates on arylamides are exceedingly low.. It carries out the reaction Release of an N-terminal amino acid, preferentially leucine, but not glutamic or aspartic acids.. In terms of biological role, presumably involved in the processing and regular turnover of intracellular proteins. Catalyzes the removal of unsubstituted N-terminal amino acids from various peptides. This chain is Probable cytosol aminopeptidase, found in Shewanella loihica (strain ATCC BAA-1088 / PV-4).